A 502-amino-acid chain; its full sequence is UPF0371 protein CLJ_B0384 (502 aa).

Belongs to the UPF0371 family.

In Clostridium botulinum (strain 657 / Type Ba4), this protein is UPF0371 protein CLJ_B0384.